A 1038-amino-acid chain; its full sequence is Translation initiation factor IF-2 (1038 aa).

The interval 32-442 (GSALASLSDE…RKGVNTAAPR (411 aa)) is disordered. Composition is skewed to low complexity over residues 65–77 (PPTK…PVAP), 100–113 (PAEA…PAQP), and 131–147 (PKLA…APAA). Basic and acidic residues-rich tracts occupy residues 204-217 (SGGR…KRES) and 275-295 (RSLD…DAGK). Low complexity predominate over residues 311–328 (PSAPAKPAAPTGSSGPAA). The segment covering 331–344 (PDIKLTRDVIEGHK) has biased composition (basic and acidic residues). Over residues 422–435 (HHYRRSRPRIRRKG) the composition is skewed to basic residues. The tr-type G domain occupies 529 to 696 (ARPPVVTFLG…TLLTIAELNE (168 aa)). The segment at 538 to 545 (GHVDHGKT) is G1. 538 to 545 (GHVDHGKT) is a binding site for GTP. The tract at residues 563 to 567 (GITQH) is G2. The tract at residues 584–587 (DTPG) is G3. GTP is bound by residues 584 to 588 (DTPGH) and 638 to 641 (NKID). The interval 638-641 (NKID) is G4. Residues 674-676 (SAT) form a G5 region.

This sequence belongs to the TRAFAC class translation factor GTPase superfamily. Classic translation factor GTPase family. IF-2 subfamily.

It is found in the cytoplasm. One of the essential components for the initiation of protein synthesis. Protects formylmethionyl-tRNA from spontaneous hydrolysis and promotes its binding to the 30S ribosomal subunits. Also involved in the hydrolysis of GTP during the formation of the 70S ribosomal complex. The chain is Translation initiation factor IF-2 from Rhodopirellula baltica (strain DSM 10527 / NCIMB 13988 / SH1).